We begin with the raw amino-acid sequence, 408 residues long: Arylacetamide deacetylase-like 3 (408 aa).

Helical transmembrane passes span 2 to 22, 46 to 66, and 109 to 129; these read VVLA…GSLL, ILSC…KLGL, and SSIP…IGSL. Positions 120-122 match the Involved in the stabilization of the negatively charged intermediate by the formation of the oxyanion hole motif; the sequence is HGG. The active site involves serine 194. An N-linked (GlcNAc...) asparagine glycan is attached at asparagine 321. Catalysis depends on residues aspartate 348 and histidine 378.

Belongs to the 'GDXG' lipolytic enzyme family.

The protein resides in the membrane. The protein is Arylacetamide deacetylase-like 3 (Aadacl3) of Mus musculus (Mouse).